Here is a 253-residue protein sequence, read N- to C-terminus: Vitamin B12 import ATP-binding protein BtuD (253 aa).

The ABC transporter domain occupies 4-236; it reads LQLSNVSVDT…NILSEVFEVD (233 aa). Residue 32–39 coordinates ATP; sequence GPNGAGKS.

Belongs to the ABC transporter superfamily. Vitamin B12 importer (TC 3.A.1.13.1) family. As to quaternary structure, the complex is composed of two ATP-binding proteins (BtuD), two transmembrane proteins (BtuC) and a solute-binding protein (BtuF).

It is found in the cell inner membrane. The enzyme catalyses an R-cob(III)alamin(out) + ATP + H2O = an R-cob(III)alamin(in) + ADP + phosphate + H(+). In terms of biological role, part of the ABC transporter complex BtuCDF involved in vitamin B12 import. Responsible for energy coupling to the transport system. This is Vitamin B12 import ATP-binding protein BtuD from Yersinia enterocolitica serotype O:8 / biotype 1B (strain NCTC 13174 / 8081).